Here is a 277-residue protein sequence, read N- to C-terminus: 2-dehydro-3-deoxyphosphooctonate aldolase (277 aa).

Belongs to the KdsA family.

It localises to the cytoplasm. The catalysed reaction is D-arabinose 5-phosphate + phosphoenolpyruvate + H2O = 3-deoxy-alpha-D-manno-2-octulosonate-8-phosphate + phosphate. The protein operates within carbohydrate biosynthesis; 3-deoxy-D-manno-octulosonate biosynthesis; 3-deoxy-D-manno-octulosonate from D-ribulose 5-phosphate: step 2/3. It participates in bacterial outer membrane biogenesis; lipopolysaccharide biosynthesis. In Alkalilimnicola ehrlichii (strain ATCC BAA-1101 / DSM 17681 / MLHE-1), this protein is 2-dehydro-3-deoxyphosphooctonate aldolase.